A 698-amino-acid chain; its full sequence is Protein CRAC (698 aa).

A PH domain is found at D22–R122. Positions T594–H630 are disordered. A compositionally biased stretch (low complexity) spans S601–T626.

Its subcellular location is the cytoplasm. Couples activated G protein to adenylyl cyclase signal transduction from surface cAMP receptor. Pianissimo a cytosolic regulator and CRAC, are both essential for activation of the enzyme adenylyl cyclase. Pianissimo and CRAC do not function redundantly. Both proteins are integral components of the adenylyl cyclase activation pathway. This is Protein CRAC (dagA) from Dictyostelium discoideum (Social amoeba).